A 428-amino-acid polypeptide reads, in one-letter code: Glutamyl-tRNA reductase (428 aa).

Substrate is bound by residues 49–52 (TCNR), S107, 112–114 (EPQ), and Q118. C50 acts as the Nucleophile in catalysis. Residue 187–192 (GAGETI) participates in NADP(+) binding.

Belongs to the glutamyl-tRNA reductase family. Homodimer.

It carries out the reaction (S)-4-amino-5-oxopentanoate + tRNA(Glu) + NADP(+) = L-glutamyl-tRNA(Glu) + NADPH + H(+). The protein operates within porphyrin-containing compound metabolism; protoporphyrin-IX biosynthesis; 5-aminolevulinate from L-glutamyl-tRNA(Glu): step 1/2. Functionally, catalyzes the NADPH-dependent reduction of glutamyl-tRNA(Glu) to glutamate 1-semialdehyde (GSA). This Pseudomonas fluorescens (strain Pf0-1) protein is Glutamyl-tRNA reductase.